The primary structure comprises 86 residues: Large ribosomal subunit protein bL31B (86 aa).

It belongs to the bacterial ribosomal protein bL31 family. Type B subfamily. Part of the 50S ribosomal subunit.

The chain is Large ribosomal subunit protein bL31B from Streptococcus pyogenes serotype M1.